We begin with the raw amino-acid sequence, 900 residues long: Nitrate reductase [NADH] (900 aa).

C172 lines the Mo-molybdopterin pocket. Residues T521 to I596 enclose the Cytochrome b5 heme-binding domain. Residues H556 and H579 each contribute to the heme site. Residues R644–T756 enclose the FAD-binding FR-type domain. Residues R696–T699, V713–Y717, F718, F725, A730–S732, and T783 contribute to the FAD site.

The protein belongs to the nitrate reductase family. As to quaternary structure, homodimer. The cofactor is FAD. Requires heme as cofactor. Mo-molybdopterin is required as a cofactor.

The catalysed reaction is nitrite + NAD(+) + H2O = nitrate + NADH + H(+). Nitrate reductase is a key enzyme involved in the first step of nitrate assimilation in plants, fungi and bacteria. In Lotus japonicus (Lotus corniculatus var. japonicus), this protein is Nitrate reductase [NADH] (NIA).